A 138-amino-acid polypeptide reads, in one-letter code: Large ribosomal subunit protein uL16 (138 aa).

Belongs to the universal ribosomal protein uL16 family. Part of the 50S ribosomal subunit.

In terms of biological role, binds 23S rRNA and is also seen to make contacts with the A and possibly P site tRNAs. This Rhodospirillum rubrum (strain ATCC 11170 / ATH 1.1.1 / DSM 467 / LMG 4362 / NCIMB 8255 / S1) protein is Large ribosomal subunit protein uL16.